The chain runs to 122 residues: Large ribosomal subunit protein uL14 (122 aa).

It belongs to the universal ribosomal protein uL14 family. In terms of assembly, part of the 50S ribosomal subunit. Forms a cluster with proteins L3 and L19. In the 70S ribosome, L14 and L19 interact and together make contacts with the 16S rRNA in bridges B5 and B8.

Binds to 23S rRNA. Forms part of two intersubunit bridges in the 70S ribosome. The chain is Large ribosomal subunit protein uL14 from Rickettsia canadensis (strain McKiel).